Reading from the N-terminus, the 306-residue chain is 26S proteasome regulatory subunit RPN11 (306 aa).

Residues 27-162 enclose the MPN domain; that stretch reads VYISSIALLK…IDAFRLIDTG (136 aa). Zn(2+) is bound by residues His109, His111, and Asp122. Positions 109–122 match the JAMM motif motif; that stretch reads HSHPGFGCWLSSVD.

Belongs to the peptidase M67A family.

Its function is as follows. Acts as a regulatory subunit of the 26 proteasome which is involved in the ATP-dependent degradation of ubiquitinated proteins. The protein is 26S proteasome regulatory subunit RPN11 (RPN11) of Candida glabrata (strain ATCC 2001 / BCRC 20586 / JCM 3761 / NBRC 0622 / NRRL Y-65 / CBS 138) (Yeast).